Consider the following 178-residue polypeptide: CD209 antigen-like protein C (178 aa).

A disulfide bond links Cys48 and Cys59. Residues 54-169 (VFQGNCYFFS…CTIKKYWICK (116 aa)) form the C-type lectin domain. The N-linked (GlcNAc...) asparagine glycan is linked to Asn70. 2 cysteine pairs are disulfide-bonded: Cys76/Cys168 and Cys147/Cys160. Ca(2+)-binding residues include Glu138, Asn140, Glu145, Asn156, and Asp157.

Its function is as follows. Probable pathogen-recognition receptor. May recognize in a calcium-dependent manner high mannose N-linked oligosaccharides in a variety of pathogen antigens. The chain is CD209 antigen-like protein C (Cd209c) from Mus musculus (Mouse).